Reading from the N-terminus, the 125-residue chain is Small ribosomal subunit protein uS13 (125 aa).

Residues Arg-93 to Lys-125 form a disordered region.

It belongs to the universal ribosomal protein uS13 family. Part of the 30S ribosomal subunit. Forms a loose heterodimer with protein S19. Forms two bridges to the 50S subunit in the 70S ribosome.

Its function is as follows. Located at the top of the head of the 30S subunit, it contacts several helices of the 16S rRNA. In the 70S ribosome it contacts the 23S rRNA (bridge B1a) and protein L5 of the 50S subunit (bridge B1b), connecting the 2 subunits; these bridges are implicated in subunit movement. Contacts the tRNAs in the A and P-sites. This chain is Small ribosomal subunit protein uS13, found in Chlorobaculum tepidum (strain ATCC 49652 / DSM 12025 / NBRC 103806 / TLS) (Chlorobium tepidum).